We begin with the raw amino-acid sequence, 632 residues long: Armadillo repeat-containing X-linked protein 2 (632 aa).

Over 1–6 (MSRVRD) the chain is Mitochondrial intermembrane. The interval 1 to 6 (MSRVRD) is mitochondrion outer membrane (MOM)-targeting sequence. A helical; Signal-anchor transmembrane segment spans residues 7-25 (AGCVAAGIVIGAGAWYCVY). A mitochondrion outer membrane (MOM)-targeting sequence region spans residues 26 to 40 (KYTRGRDQTKKRMAK). Over 26–632 (KYTRGRDQTK…VKVIKLVNKF (607 aa)) the chain is Cytoplasmic. Disordered stretches follow at residues 68–124 (GFSP…AGVG), 160–304 (APKV…KVEV), and 335–369 (VPDSEEGESGWTDTESDSDSEPETQRRGRGRRPVA). 2 stretches are compositionally biased toward low complexity: residues 86–120 (EASALDTVGAEAVAPAASSAEAQSGAGSQAQEADG) and 211–241 (VASPTEAAEAPVPATPTGAAAPTGAAESPGT). Residues 336–356 (PDSEEGESGWTDTESDSDSEP) are compositionally biased toward acidic residues. 3 ARM repeats span residues 376–416 (PYEI…NNAN), 418–457 (SCNQETIRKLGGLPIIANMINKTDPHIKEKALMAMNNLSE), and 498–537 (ITNDYQHLLVNSIANFFRLLSQGGGKIKVEILKILSNFAE).

The protein belongs to the eutherian X-chromosome-specific Armcx family. In terms of tissue distribution, expressed at high levels ovary, heart, testis, prostate, brain, spleen and colon. Expressed at very low levels in liver and thymus. Not expressed in peripheral blood leukocytes. Not expressed in pancreas and ovarian carcinomas.

It localises to the mitochondrion. It is found in the mitochondrion outer membrane. Functionally, may regulate the dynamics and distribution of mitochondria in neural cells. This is Armadillo repeat-containing X-linked protein 2 (ARMCX2) from Homo sapiens (Human).